The sequence spans 149 residues: Large ribosomal subunit protein uL13 (149 aa).

This sequence belongs to the universal ribosomal protein uL13 family. Part of the 50S ribosomal subunit.

Its function is as follows. This protein is one of the early assembly proteins of the 50S ribosomal subunit, although it is not seen to bind rRNA by itself. It is important during the early stages of 50S assembly. This chain is Large ribosomal subunit protein uL13, found in Prosthecochloris aestuarii (strain DSM 271 / SK 413).